Here is a 115-residue protein sequence, read N- to C-terminus: MANKQNYYELYRKSTIGEALTDTLEELLINQYISNSLYQKILTQFDKTINEALSNTVKAKTTFKGSLHTYRFCDSVWTFILENAQFKTEANEIVKVDRVKIVACDANVQDAPPPK.

Belongs to the TFIIA subunit 2 family. TFIIA is a heterodimer of the large unprocessed subunit 1 and a small subunit gamma.

The protein resides in the nucleus. In terms of biological role, TFIIA is a component of the transcription machinery of RNA polymerase II and plays an important role in transcriptional activation. TFIIA in a complex with tbp mediates transcriptional activity. This Dictyostelium discoideum (Social amoeba) protein is Transcription initiation factor IIA subunit 2 (gtf2a2).